The primary structure comprises 258 residues: Sugar fermentation stimulation protein homolog (258 aa).

It belongs to the SfsA family.

This chain is Sugar fermentation stimulation protein homolog, found in Prochlorococcus marinus (strain NATL2A).